Consider the following 104-residue polypeptide: Succinate dehydrogenase assembly factor 4, mitochondrial (104 aa).

Residues 1–30 constitute a mitochondrion transit peptide; sequence MVSTTLSVSRMTFVWRAARPSLLNHSLRKM. The disordered stretch occupies residues 29-104; that stretch reads KMSYQEGKPE…WERKGRCIDF (76 aa). 2 stretches are compositionally biased toward basic and acidic residues: residues 63–83 and 91–104; these read EREP…EKGG and RYGD…CIDF.

This sequence belongs to the SDHAF4 family. Interacts with Sdha in its FAD-bound form.

The protein localises to the mitochondrion matrix. Plays an essential role in the assembly of succinate dehydrogenase (SDH), an enzyme complex (also referred to as respiratory complex II) that is a component of both the tricarboxylic acid (TCA) cycle and the mitochondrial electron transport chain, and which couples the oxidation of succinate to fumarate with the reduction of ubiquinone (coenzyme Q) to ubiquinol. Binds to the flavoprotein subunit Sdha in its FAD-bound form, blocking the generation of excess reactive oxygen species (ROS) and facilitating its assembly with the iron-sulfur protein subunit Sdhb into the SDH catalytic dimer. The protein is Succinate dehydrogenase assembly factor 4, mitochondrial of Mus musculus (Mouse).